We begin with the raw amino-acid sequence, 194 residues long: CSCSPVHPQQAFCNADIVIRAKAVNKKEVDSGNDIYGNPIKRIQYEIKQIKMFKGPDQDIEFIYTAPSSAVCGVSLDIGGKKEYLIAGKAEGNGNMHITLCDFIVPWDTLSATQKKSLNHRYQMGCECKITRCPMIPCYISSPDECLWMDWVTEKNINRHQAKFFACIKRSDGSCAWYRGAAPPKQEFLDIEDP.

C1 lines the Zn(2+) pocket. 2 involved in metalloproteinase-binding regions span residues 1 to 4 (CSCS) and 69 to 70 (SA). 6 cysteine pairs are disulfide-bonded: C1–C72, C3–C101, C13–C126, C128–C175, C133–C138, and C146–C167. In terms of domain architecture, NTR spans 1-126 (CSCSPVHPQQ…SLNHRYQMGC (126 aa)).

The protein belongs to the protease inhibitor I35 (TIMP) family. In terms of assembly, interacts (via the C-terminal) with MMP2 (via the C-terminal PEX domain); the interaction inhibits the MMP2 activity. In terms of processing, the activity of TIMP2 is dependent on the presence of disulfide bonds.

The protein resides in the secreted. Functionally, complexes with metalloproteinases (such as collagenases) and irreversibly inactivates them by binding to their catalytic zinc cofactor. This chain is Metalloproteinase inhibitor 2 (TIMP2), found in Oryctolagus cuniculus (Rabbit).